Here is a 63-residue protein sequence, read N- to C-terminus: Large ribosomal subunit protein uL30 (63 aa).

The protein belongs to the universal ribosomal protein uL30 family. In terms of assembly, part of the 50S ribosomal subunit.

The polypeptide is Large ribosomal subunit protein uL30 (Caulobacter sp. (strain K31)).